A 291-amino-acid chain; its full sequence is Small ribosomal subunit protein uS2 (291 aa).

Residues 254–291 form a disordered region; sequence RTSNRDNKNNKNNNNTDNTDNAASIKEEDLIGGSNNEN. Over residues 263-277 the composition is skewed to low complexity; sequence NKNNNNTDNTDNAAS.

It belongs to the universal ribosomal protein uS2 family.

This chain is Small ribosomal subunit protein uS2, found in Ehrlichia canis (strain Jake).